Reading from the N-terminus, the 215-residue chain is 3-isopropylmalate dehydratase small subunit (215 aa).

This sequence belongs to the LeuD family. LeuD type 1 subfamily. As to quaternary structure, heterodimer of LeuC and LeuD.

The catalysed reaction is (2R,3S)-3-isopropylmalate = (2S)-2-isopropylmalate. It functions in the pathway amino-acid biosynthesis; L-leucine biosynthesis; L-leucine from 3-methyl-2-oxobutanoate: step 2/4. In terms of biological role, catalyzes the isomerization between 2-isopropylmalate and 3-isopropylmalate, via the formation of 2-isopropylmaleate. The chain is 3-isopropylmalate dehydratase small subunit from Xanthomonas campestris pv. campestris (strain 8004).